Here is a 267-residue protein sequence, read N- to C-terminus: MRRIAVMGAAGRMGKTLIEAVQQTPGAGLTAAIDRPDSSLVGADAGELAALGRIGVLLCDDLAKVVDEFDVLIDFTHPSVTLKNLAFCRKAGKAMIIGTTGFSVEEKQLLAEAGKEIPIVFAANFSVGVNLSLKLLDMAARVLGDDVDIEIIEAHHRHKVDAPSGTALRMGEVVANALGRDLQEVAVYGREGQTGARDRKTIGFATVRAGDVVGDHTVLFAAEGERLEITHKASSRMTFAKGAVRAALWLDGREPGLYDMQDVLELR.

Residues 8–13 (GAAGRM) and Asp-34 contribute to the NAD(+) site. Arg-35 lines the NADP(+) pocket. Residues 98 to 100 (GTT) and 122 to 125 (AANF) contribute to the NAD(+) site. His-155 functions as the Proton donor/acceptor in the catalytic mechanism. His-156 provides a ligand contact to (S)-2,3,4,5-tetrahydrodipicolinate. The Proton donor role is filled by Lys-159. 165 to 166 (GT) is a (S)-2,3,4,5-tetrahydrodipicolinate binding site.

This sequence belongs to the DapB family.

It is found in the cytoplasm. The enzyme catalyses (S)-2,3,4,5-tetrahydrodipicolinate + NAD(+) + H2O = (2S,4S)-4-hydroxy-2,3,4,5-tetrahydrodipicolinate + NADH + H(+). It carries out the reaction (S)-2,3,4,5-tetrahydrodipicolinate + NADP(+) + H2O = (2S,4S)-4-hydroxy-2,3,4,5-tetrahydrodipicolinate + NADPH + H(+). The protein operates within amino-acid biosynthesis; L-lysine biosynthesis via DAP pathway; (S)-tetrahydrodipicolinate from L-aspartate: step 4/4. In terms of biological role, catalyzes the conversion of 4-hydroxy-tetrahydrodipicolinate (HTPA) to tetrahydrodipicolinate. The polypeptide is 4-hydroxy-tetrahydrodipicolinate reductase (Pseudomonas entomophila (strain L48)).